A 237-amino-acid polypeptide reads, in one-letter code: Purine nucleoside phosphorylase DeoD-type (237 aa).

H4 contacts a purine D-ribonucleoside. Phosphate contacts are provided by residues G20, R24, R43, and R87–T90. Residues E179–E181 and S203–D204 contribute to the a purine D-ribonucleoside site. The active-site Proton donor is D204.

The protein belongs to the PNP/UDP phosphorylase family. As to quaternary structure, homohexamer; trimer of homodimers.

It catalyses the reaction a purine D-ribonucleoside + phosphate = a purine nucleobase + alpha-D-ribose 1-phosphate. It carries out the reaction a purine 2'-deoxy-D-ribonucleoside + phosphate = a purine nucleobase + 2-deoxy-alpha-D-ribose 1-phosphate. In terms of biological role, catalyzes the reversible phosphorolytic breakdown of the N-glycosidic bond in the beta-(deoxy)ribonucleoside molecules, with the formation of the corresponding free purine bases and pentose-1-phosphate. This is Purine nucleoside phosphorylase DeoD-type from Streptococcus pyogenes serotype M12 (strain MGAS2096).